A 269-amino-acid polypeptide reads, in one-letter code: 3'(2'),5'-bisphosphate nucleotidase CysQ (269 aa).

Positions 69, 89, 91, 92, and 216 each coordinate Mg(2+). Substrate is bound at residue E69. Residues 91 to 94 (LDGT) and D216 contribute to the substrate site.

It belongs to the inositol monophosphatase superfamily. CysQ family. Requires Mg(2+) as cofactor.

The protein localises to the cell inner membrane. The enzyme catalyses adenosine 3',5'-bisphosphate + H2O = AMP + phosphate. Its function is as follows. Converts adenosine-3',5'-bisphosphate (PAP) to AMP. This Haemophilus influenzae (strain ATCC 51907 / DSM 11121 / KW20 / Rd) protein is 3'(2'),5'-bisphosphate nucleotidase CysQ.